The sequence spans 206 residues: Cytochrome c oxidase assembly protein CtaG (206 aa).

Residues 1–17 are Cytoplasmic-facing; sequence MPEVQPSALPKPAPRLG. The helical; Signal-anchor for type II membrane protein transmembrane segment at 18-40 threads the bilayer; sequence RDAAVASICGFVVALMVGASFAA. Residues 41–206 lie on the Periplasmic side of the membrane; the sequence is VPFYDWFCRT…GEPDQRKGNL (166 aa).

It belongs to the COX11/CtaG family.

Its subcellular location is the cell inner membrane. In terms of biological role, exerts its effect at some terminal stage of cytochrome c oxidase synthesis, probably by being involved in the insertion of the copper B into subunit I. This Rhodopseudomonas palustris (strain BisB5) protein is Cytochrome c oxidase assembly protein CtaG.